Consider the following 465-residue polypeptide: Flavin-containing monooxygenase FMO GS-OX-like 2 (465 aa).

18-23 (GAGAAG) serves as a coordination point for FAD. 217–222 (GSSASG) contacts NADP(+).

This sequence belongs to the FMO family. The cofactor is FAD.

Functionally, catalyzes the conversion of methylthioalkyl glucosinolates of any chain length into methylsulfinylalkyl glucosinolates. The protein is Flavin-containing monooxygenase FMO GS-OX-like 2 of Arabidopsis thaliana (Mouse-ear cress).